The primary structure comprises 118 residues: uncharacterized protein (118 aa).

Transmembrane regions (helical) follow at residues Ile12–Phe32, Leu39–Ile59, Ile63–Ile83, and Ser98–Phe118.

The protein resides in the cell membrane. This is an uncharacterized protein from Methanocaldococcus jannaschii (strain ATCC 43067 / DSM 2661 / JAL-1 / JCM 10045 / NBRC 100440) (Methanococcus jannaschii).